The sequence spans 426 residues: Cytochrome c biogenesis protein CcsB (426 aa).

3 helical membrane passes run 14–34 (LKIAILLLLVIAVSCAAGTLI), 72–92 (SFWFLFLLIWLGLALSVCSFR), and 162–182 (LGPILIHLGMILLMIGATYGS).

This sequence belongs to the Ccs1/CcsB family. May interact with CcsA.

It is found in the cellular thylakoid membrane. Functionally, required during biogenesis of c-type cytochromes (cytochrome c6 and cytochrome f) at the step of heme attachment. This Prochlorococcus marinus (strain NATL2A) protein is Cytochrome c biogenesis protein CcsB.